The sequence spans 242 residues: Myogenic factor 6 (242 aa).

Residues 31-63 (SPLYPGSDGTLSPCQDQMPPEAGSDSSGEEHVL) form a disordered region. Positions 93 to 144 (DRRKAATLRERRRLKKINEAFEALKRRTVANPNQRLPKVEILRSAISYIERL) constitute a bHLH domain.

In terms of assembly, efficient DNA binding requires dimerization with another bHLH protein. Interacts with CSRP3. In terms of tissue distribution, skeletal muscle.

It localises to the nucleus. Functionally, involved in muscle differentiation (myogenic factor). Induces fibroblasts to differentiate into myoblasts. Probable sequence specific DNA-binding protein. This chain is Myogenic factor 6 (MYF6), found in Homo sapiens (Human).